Reading from the N-terminus, the 143-residue chain is Large ribosomal subunit protein uL11 (143 aa).

It belongs to the universal ribosomal protein uL11 family. In terms of assembly, part of the ribosomal stalk of the 50S ribosomal subunit. Interacts with L10 and the large rRNA to form the base of the stalk. L10 forms an elongated spine to which L12 dimers bind in a sequential fashion forming a multimeric L10(L12)X complex. In terms of processing, one or more lysine residues are methylated.

Functionally, forms part of the ribosomal stalk which helps the ribosome interact with GTP-bound translation factors. The polypeptide is Large ribosomal subunit protein uL11 (Marinobacter nauticus (strain ATCC 700491 / DSM 11845 / VT8) (Marinobacter aquaeolei)).